The following is a 172-amino-acid chain: RNA silencing suppressor p19 (172 aa).

Basic and acidic residues-rich tracts occupy residues 1–14 (MERAIQGSDVREQA) and 150–172 (SEREGNVSRRRPEGTEAFKEESE). Disordered stretches follow at residues 1-34 (MERAIQGSDVREQADSECWDGGGGGTTSPFKLPD) and 145-172 (LQPTPSEREGNVSRRRPEGTEAFKEESE).

This sequence belongs to the tombusvirus protein p19 family. In terms of assembly, homodimer.

Viral suppressor of RNA silencing which binds specifically to silencing RNAs (siRNAs). Acts as a molecular caliper to specifically select siRNAs based on the length of the duplex region of the RNA. The polypeptide is RNA silencing suppressor p19 (Cymbidium ringspot virus (CymRSV)).